Reading from the N-terminus, the 217-residue chain is MKTIQSIALLSAIVAAPSVLADVEIQVPSSVDILAVNEAKPDLDGGLFSSHKTLTLPDGQNQIVFQYQLAFDKGNDREFVDSDAVIATFDATDTTLTFDLPKYRNTAEAKSGFKNLEWSLVDENQNEISVKQDKLVKDGMQIGRKYPQEAKEYNQQGGIAALAIGTTAGATAAVVQPVTLPAKIDGNAANTAEEMLYFWYEKADAETKQKFKDYVNK.

An N-terminal signal peptide occupies residues 1–21 (MKTIQSIALLSAIVAAPSVLA).

It belongs to the UPF0319 family.

This is UPF0319 protein VS_II0881 from Vibrio atlanticus (strain LGP32) (Vibrio splendidus (strain Mel32)).